We begin with the raw amino-acid sequence, 369 residues long: Anhydro-N-acetylmuramic acid kinase (369 aa).

ATP is bound at residue 12-19; it reads GTSLDGVD.

This sequence belongs to the anhydro-N-acetylmuramic acid kinase family.

It carries out the reaction 1,6-anhydro-N-acetyl-beta-muramate + ATP + H2O = N-acetyl-D-muramate 6-phosphate + ADP + H(+). Its pathway is amino-sugar metabolism; 1,6-anhydro-N-acetylmuramate degradation. It functions in the pathway cell wall biogenesis; peptidoglycan recycling. Catalyzes the specific phosphorylation of 1,6-anhydro-N-acetylmuramic acid (anhMurNAc) with the simultaneous cleavage of the 1,6-anhydro ring, generating MurNAc-6-P. Is required for the utilization of anhMurNAc either imported from the medium or derived from its own cell wall murein, and thus plays a role in cell wall recycling. In Shigella flexneri serotype 5b (strain 8401), this protein is Anhydro-N-acetylmuramic acid kinase.